A 172-amino-acid chain; its full sequence is Shikimate kinase (172 aa).

Residue 11–16 participates in ATP binding; sequence GAGKST. Ser15 provides a ligand contact to Mg(2+). Positions 33, 57, and 79 each coordinate substrate. Arg117 provides a ligand contact to ATP. A substrate-binding site is contributed by Arg136. Residue Arg153 participates in ATP binding.

This sequence belongs to the shikimate kinase family. As to quaternary structure, monomer. Mg(2+) serves as cofactor.

It is found in the cytoplasm. The catalysed reaction is shikimate + ATP = 3-phosphoshikimate + ADP + H(+). It participates in metabolic intermediate biosynthesis; chorismate biosynthesis; chorismate from D-erythrose 4-phosphate and phosphoenolpyruvate: step 5/7. In terms of biological role, catalyzes the specific phosphorylation of the 3-hydroxyl group of shikimic acid using ATP as a cosubstrate. In Pseudomonas syringae pv. syringae (strain B728a), this protein is Shikimate kinase.